A 334-amino-acid chain; its full sequence is Antho-RFamide neuropeptides (334 aa).

The signal sequence occupies residues 1–26; that stretch reads MLVAMTTASYVTILVTLLFHILTINA. The propeptide occupies 27 to 116; that stretch reads KTVTKRAKET…REFQGRFGRE (90 aa). Composition is skewed to basic and acidic residues over residues 115–289 and 303–334; these read REQG…RELL and PQTR…ANKS. Positions 115-334 are disordered; sequence REQGRFGREE…ESNDEEANKS (220 aa). The residue at position 120 (F120) is a Phenylalanine amide. A propeptide spanning residues 122 to 125 is cleaved from the precursor; that stretch reads REED. The residue at position 129 (F129) is a Phenylalanine amide. The propeptide occupies 131–134; that stretch reads REED. F138 carries the phenylalanine amide modification. Residues 140–142 constitute a propeptide that is removed on maturation; that stretch reads REE. F146 carries the post-translational modification Phenylalanine amide. The propeptide occupies 148–151; the sequence is REED. The residue at position 155 (F155) is a Phenylalanine amide. A propeptide spanning residues 157–160 is cleaved from the precursor; sequence REED. At F164 the chain carries Phenylalanine amide. The propeptide occupies 166–169; sequence REED. F173 is modified (phenylalanine amide). Residues 175 to 178 constitute a propeptide that is removed on maturation; sequence REEE. F182 carries the phenylalanine amide modification. A propeptide spanning residues 184–187 is cleaved from the precursor; it reads REED. F191 carries the post-translational modification Phenylalanine amide. Positions 193–196 are excised as a propeptide; sequence REEE. Phenylalanine amide is present on F200. Positions 202–205 are excised as a propeptide; that stretch reads REED. Phenylalanine amide is present on F209. Residues 211-214 constitute a propeptide that is removed on maturation; sequence REED. Residue F218 is modified to Phenylalanine amide. A propeptide spanning residues 220–223 is cleaved from the precursor; it reads REEE. A Phenylalanine amide modification is found at F227. Residues 229–233 constitute a propeptide that is removed on maturation; that stretch reads KRDED. At F237 the chain carries Phenylalanine amide. Positions 239 to 242 are excised as a propeptide; that stretch reads KRED. F246 carries the post-translational modification Phenylalanine amide. A propeptide spanning residues 248–252 is cleaved from the precursor; that stretch reads KRDED. Position 256 is a phenylalanine amide (F256). The propeptide occupies 258–262; the sequence is KRDED. Position 266 is a phenylalanine amide (F266). Residues 268-271 constitute a propeptide that is removed on maturation; it reads KRED. Phenylalanine amide is present on F275. Positions 277 to 280 are excised as a propeptide; the sequence is KRED. F284 bears the Phenylalanine amide mark. The propeptide occupies 286–334; the sequence is RELLAKLNKRTTSIQEDPQTRFRDVQMTRRNVAKKDKIEESNDEEANKS.

This sequence belongs to the FARP (FMRFamide related peptide) family. In terms of tissue distribution, neurons associated with smooth muscle fibers.

Its subcellular location is the secreted. Its function is as follows. Not known but it could act as a transmitter at neuromuscular synapses. In Calliactis parasitica (Sea anemone), this protein is Antho-RFamide neuropeptides.